A 90-amino-acid polypeptide reads, in one-letter code: Probable Fe(2+)-trafficking protein (90 aa).

It belongs to the Fe(2+)-trafficking protein family. As to quaternary structure, monomer.

Its function is as follows. Could be a mediator in iron transactions between iron acquisition and iron-requiring processes, such as synthesis and/or repair of Fe-S clusters in biosynthetic enzymes. This Serratia proteamaculans (strain 568) protein is Probable Fe(2+)-trafficking protein.